The chain runs to 282 residues: E3 ubiquitin-protein ligase RNF217 (282 aa).

The segment at 1-218 (MSCRVCLEDR…LSIFGCKYRY (218 aa)) is TRIAD supradomain. Zn(2+) contacts are provided by C3, C6, C23, C26, C123, C126, H131, C136, C163, and C166. The segment at 3-49 (CRVCLEDRSIKPLPCCKKPVCDECLKRYLSSQVQLGQAEIQCPITEC) adopts an RING-type 1 zinc-finger fold. Residues 68–136 (IKYKYFLELS…HAPWHEGVNC (69 aa)) form an IBR-type zinc finger. The segment at 163–192 (CPRCKVHIQRTEGCDHMTCSQCNTNFCYRC) adopts an RING-type 2; atypical zinc-finger fold. The active site involves C176. Residues C181, C184, C189, C192, H205, and C214 each contribute to the Zn(2+) site. A helical membrane pass occupies residues 243-263 (LLIVLGLVLGALAVVIGLFGL).

The protein belongs to the RBR family. RNF217 subfamily.

The protein resides in the cytoplasm. Its subcellular location is the membrane. It catalyses the reaction [E2 ubiquitin-conjugating enzyme]-S-ubiquitinyl-L-cysteine + [acceptor protein]-L-lysine = [E2 ubiquitin-conjugating enzyme]-L-cysteine + [acceptor protein]-N(6)-ubiquitinyl-L-lysine.. The protein operates within protein modification; protein ubiquitination. Functionally, E3 ubiquitin-protein ligase which accepts ubiquitin from E2 ubiquitin-conjugating enzymes in the form of a thioester and then directly transfers the ubiquitin to targeted substrates. Mediates the degradation of the iron exporter ferroportin/SLC40A1 and thus regulates iron homeostasis. The sequence is that of E3 ubiquitin-protein ligase RNF217 (rnf217) from Xenopus laevis (African clawed frog).